Here is a 121-residue protein sequence, read N- to C-terminus: MNIKRVRRISSEIKKVISSSIINSLKDPRIDKLNVSVTEVKVTNDLSFATVYIAVIGDDEKKKQTLEGLNKAKGFLKKQIGENVDLRHVPQLIFKIDETSEQSMHIENLIKSIHEENHNEN.

It belongs to the RbfA family. As to quaternary structure, monomer. Binds 30S ribosomal subunits, but not 50S ribosomal subunits or 70S ribosomes.

The protein localises to the cytoplasm. Its function is as follows. One of several proteins that assist in the late maturation steps of the functional core of the 30S ribosomal subunit. Associates with free 30S ribosomal subunits (but not with 30S subunits that are part of 70S ribosomes or polysomes). Required for efficient processing of 16S rRNA. May interact with the 5'-terminal helix region of 16S rRNA. The protein is Ribosome-binding factor A of Finegoldia magna (strain ATCC 29328 / DSM 20472 / WAL 2508) (Peptostreptococcus magnus).